The following is a 73-amino-acid chain: Conotoxin reg3a (73 aa).

A signal peptide spans 1 to 20 (MMSKLRVLLTICLLLFPLSA). A propeptide spanning residues 21–55 (LPLDGDQPADQPAKRMWNGKLAARKPRFDKYDLVR) is cleaved from the precursor. 4-hydroxyproline occurs at positions 59, 60, 65, and 70. Cysteine 72 is subject to Cysteine amide.

In terms of processing, contains 3 disulfide bonds. In terms of tissue distribution, expressed by the venom duct.

It is found in the secreted. This is Conotoxin reg3a from Conus regius (Crown cone).